We begin with the raw amino-acid sequence, 1180 residues long: Lon protease homolog 2, peroxisomal (1180 aa).

A Lon N-terminal domain is found at 19-366; that stretch reads LPTCKLDSNL…ELINMINQLI (348 aa). The disordered stretch occupies residues 416–465; the sequence is PISNRGNIKSFNNSENGNNNKTNGSGITSRRPKSNEDGGEVYDEEDDDEE. Residues 422–444 show a composition bias toward low complexity; sequence NIKSFNNSENGNNNKTNGSGITS. Acidic residues predominate over residues 452 to 465; that stretch reads DGGEVYDEEDDDEE. 667–674 is a binding site for ATP; it reads GPPGTGKT. A Lon proteolytic domain is found at 924 to 1163; that stretch reads NSRVGIVNGL…YDVMKILWGE (240 aa). Catalysis depends on residues Ser-1032 and Lys-1075.

The protein belongs to the peptidase S16 family.

It is found in the peroxisome matrix. It catalyses the reaction Hydrolysis of proteins in presence of ATP.. Its function is as follows. ATP-dependent serine protease that mediates the selective degradation of misfolded and unassembled polypeptides in the peroxisomal matrix. Necessary for type 2 peroxisome targeting signal (PTS2)-containing protein processing and facilitates peroxisome matrix protein import. This Scheffersomyces stipitis (strain ATCC 58785 / CBS 6054 / NBRC 10063 / NRRL Y-11545) (Yeast) protein is Lon protease homolog 2, peroxisomal.